Reading from the N-terminus, the 244-residue chain is uncharacterized protein (244 aa).

Transmembrane regions (helical) follow at residues 29–49 and 139–159; these read WIPW…TQHM and LGMK…ATVI.

The protein belongs to the FMP10 family.

It is found in the mitochondrion membrane. This is an uncharacterized protein from Saccharomyces cerevisiae (strain ATCC 204508 / S288c) (Baker's yeast).